Reading from the N-terminus, the 115-residue chain is Gonadotropin subunit beta-2 (115 aa).

Cystine bridges form between cysteine 6/cysteine 54, cysteine 20/cysteine 69, cysteine 23/cysteine 107, cysteine 31/cysteine 85, cysteine 35/cysteine 87, and cysteine 90/cysteine 97. N-linked (GlcNAc...) asparagine glycosylation occurs at asparagine 10.

It belongs to the glycoprotein hormones subunit beta family. In terms of assembly, heterodimer of an alpha and a beta chain.

Its subcellular location is the secreted. Functionally, involved in gametogenesis and steroidogenesis. The polypeptide is Gonadotropin subunit beta-2 (cgbb) (Thunnus obesus (Bigeye tuna)).